The primary structure comprises 157 residues: Ribosome maturation factor RimP (157 aa).

It belongs to the RimP family.

It localises to the cytoplasm. Its function is as follows. Required for maturation of 30S ribosomal subunits. In Levilactobacillus brevis (strain ATCC 367 / BCRC 12310 / CIP 105137 / JCM 1170 / LMG 11437 / NCIMB 947 / NCTC 947) (Lactobacillus brevis), this protein is Ribosome maturation factor RimP.